We begin with the raw amino-acid sequence, 1310 residues long: PAN2-PAN3 deadenylation complex catalytic subunit pan2 (1310 aa).

4 WD repeats span residues 22-61 (YHAGPASTIAFDNQDELLWIGTQKGFAGSFIGRELKRFTA), 67-105 (ETDGPLRQFLFVDKGVIFLGSRSVYMAARSGVPIWSIRH), 106-144 (ESMQDLRAMSFTSKGTSEILVAGWQNKMLVIDVNKGEVV), and 145-184 (KELPTQDQYSFLKMSRYICAATNKGTVNILDPITFTIKKQ). The segment at 318–463 (QFTEIGIPPR…NNDHWSLRPE (146 aa)) is linker. In terms of domain architecture, USP spans 463–850 (EAPPEYRICE…MPVVVMFQVK (388 aa)). Zn(2+)-binding residues include histidine 525, cysteine 530, cysteine 535, cysteine 538, cysteine 645, cysteine 648, cysteine 700, and cysteine 703. One can recognise an Exonuclease domain in the interval 897 to 1070 (IAIDTEFIRL…EDAQTALKLY (174 aa)). Positions 900, 902, 1009, and 1062 each coordinate a divalent metal cation. The segment at 1121–1169 (TPPVPAPGTTEGSFEISNSSTATTGGSALSATGGMGSASASSSMPSTPV) is disordered. Residues 1139–1168 (SSTATTGGSALSATGGMGSASASSSMPSTP) are compositionally biased toward low complexity.

It belongs to the peptidase C19 family. PAN2 subfamily. As to quaternary structure, forms a heterotrimer with an asymmetric homodimer of the regulatory subunit par-2/pan3 to form the poly(A)-nuclease (PAN) deadenylation complex. It depends on a divalent metal cation as a cofactor.

It is found in the cytoplasm. It catalyses the reaction Exonucleolytic cleavage of poly(A) to 5'-AMP.. With respect to regulation, positively regulated by the regulatory subunit par-2/pan3. Its function is as follows. Catalytic subunit of the poly(A)-nuclease (PAN) deadenylation complex, one of two cytoplasmic mRNA deadenylases involved in mRNA turnover. PAN specifically shortens poly(A) tails of RNA and the activity is stimulated by poly(A)-binding protein pabp-1. PAN deadenylation is followed by rapid degradation of the shortened mRNA tails by the CCR4-NOT complex. Deadenylated mRNAs are then degraded by two alternative mechanisms, namely exosome-mediated 3'-5' exonucleolytic degradation, or deadenylation-dependent mRNA decaping and subsequent 5'-3' exonucleolytic degradation by rgb-30/xrn1. May also be involved in post-transcriptional maturation of mRNA poly(A) tails. This Neurospora crassa (strain ATCC 24698 / 74-OR23-1A / CBS 708.71 / DSM 1257 / FGSC 987) protein is PAN2-PAN3 deadenylation complex catalytic subunit pan2 (par-1).